A 194-amino-acid chain; its full sequence is MTELALILVSAILVNNFVLVQFLGLCPFMGVSRKIETAIGLSLATTFVLTLAAICSYILQRYVLRPLDLEFLRTIGFILVIAVVVQFTEMLVKKTSPLLYRVLGIFLPLITTNCIVLGVALLNANRAEYGFLEATTQGFGAGLGFSLVLVLFAALRERIAIADVPAPFRGAAIGMITAGLMSLAFMGFSGLIRP.

A run of 6 helical transmembrane segments spans residues 4-24 (LALI…QFLG), 39-59 (IGLS…SYIL), 71-91 (FLRT…TEML), 102-122 (VLGI…VALL), 135-155 (TTQG…FAAL), and 172-192 (AIGM…SGLI).

This sequence belongs to the NqrDE/RnfAE family. In terms of assembly, the complex is composed of six subunits: RnfA, RnfB, RnfC, RnfD, RnfE and RnfG.

Its subcellular location is the cell inner membrane. Its function is as follows. Part of a membrane-bound complex that couples electron transfer with translocation of ions across the membrane. The sequence is that of Ion-translocating oxidoreductase complex subunit A from Pseudomonas paraeruginosa (strain DSM 24068 / PA7) (Pseudomonas aeruginosa (strain PA7)).